A 706-amino-acid chain; its full sequence is GDNF-inducible zinc finger protein 1 (706 aa).

Residues 31 to 103 enclose the BTB domain; sequence CDVTVSIENQ…VYTAKVRVEE (73 aa). Over residues 149-165 the composition is skewed to polar residues; it reads VEASSGPQVSVTPSSKA. 2 disordered regions span residues 149 to 220 and 242 to 308; these read VEAS…PKIR and RRLR…KDGE. Composition is skewed to basic and acidic residues over residues 197 to 212 and 242 to 277; these read PSKK…KDVA and RRLR…EPAA. 10 C2H2-type zinc fingers span residues 315-337, 346-369, 375-398, 405-427, 433-455, 461-483, 489-511, 517-539, 545-567, and 573-595; these read FQCT…IKYH, YRCD…RHVH, FPCE…LQVH, HRCG…ERTH, YGCT…LRVH, FVCD…KRCH, FMCE…NRIH, FKCE…IKVH, YCCD…HRIH, and YMCN…TSIH. Residue S611 is modified to Phosphoserine.

It belongs to the krueppel C2H2-type zinc-finger protein family. Interacts with NCL. Expressed in several tissues, with highest levels in liver. Also expressed in embryos from 7 to 17 dpc.

The protein resides in the nucleus. It is found in the cytoplasm. The protein localises to the nucleolus. Functionally, transcriptional repressor that binds the GZF1 responsive element (GRE) (consensus: 5'-TGCGCN[TG][CA]TATA-3'). May be regulating VSX2/HOX10 expression. The sequence is that of GDNF-inducible zinc finger protein 1 from Mus musculus (Mouse).